A 118-amino-acid polypeptide reads, in one-letter code: UPF0102 protein PC1_0307 (118 aa).

Belongs to the UPF0102 family.

This chain is UPF0102 protein PC1_0307, found in Pectobacterium carotovorum subsp. carotovorum (strain PC1).